Consider the following 181-residue polypeptide: Ribosome-recycling factor (181 aa).

A disordered region spans residues 131–154; sequence RRDAMDSVKKEKEMPEDDVRKAEN.

This sequence belongs to the RRF family.

The protein localises to the cytoplasm. Responsible for the release of ribosomes from messenger RNA at the termination of protein biosynthesis. May increase the efficiency of translation by recycling ribosomes from one round of translation to another. In Leuconostoc citreum (strain KM20), this protein is Ribosome-recycling factor.